The chain runs to 157 residues: Probable succinate transporter subunit YjjB (157 aa).

A run of 5 helical transmembrane segments spans residues 8 to 28, 34 to 54, 55 to 75, 87 to 107, and 129 to 149; these read LALM…AMVF, ALPW…LMMS, AGFN…SIGI, VFTV…TAMI, and FLKA…PGLW.

This sequence belongs to the ThrE exporter (TC 2.A.79) family. The transporter is composed of YjjB and YjjP.

Its subcellular location is the cell inner membrane. Its function is as follows. Involved in succinate export with YjjP. Both proteins are required for export. The protein is Probable succinate transporter subunit YjjB of Salmonella typhi.